The sequence spans 209 residues: V-type ATP synthase subunit D (209 aa).

This sequence belongs to the V-ATPase D subunit family.

In terms of biological role, produces ATP from ADP in the presence of a proton gradient across the membrane. The sequence is that of V-type ATP synthase subunit D (atpD) from Chlamydia pneumoniae (Chlamydophila pneumoniae).